The primary structure comprises 153 residues: Peptide deformylase (153 aa).

Fe cation contacts are provided by cysteine 87 and histidine 129. Glutamate 130 is a catalytic residue. Histidine 133 is a Fe cation binding site.

It belongs to the polypeptide deformylase family. Fe(2+) is required as a cofactor.

The catalysed reaction is N-terminal N-formyl-L-methionyl-[peptide] + H2O = N-terminal L-methionyl-[peptide] + formate. Removes the formyl group from the N-terminal Met of newly synthesized proteins. Requires at least a dipeptide for an efficient rate of reaction. N-terminal L-methionine is a prerequisite for activity but the enzyme has broad specificity at other positions. The polypeptide is Peptide deformylase (Dictyoglomus turgidum (strain DSM 6724 / Z-1310)).